The primary structure comprises 381 residues: Galactose-1-phosphate uridylyltransferase (381 aa).

Zn(2+) is bound by residues cysteine 65 and cysteine 68. 90 to 91 (ND) lines the UDP-alpha-D-glucose pocket. Histidine 131 provides a ligand contact to Zn(2+). Asparagine 175 lines the UDP-alpha-D-glucose pocket. Histidine 186 contacts Zn(2+). The Tele-UMP-histidine intermediate role is filled by histidine 188. Glutamine 190 is a binding site for UDP-alpha-D-glucose. Residues glutamate 204, histidine 306, histidine 323, and histidine 325 each coordinate Fe cation. UDP-alpha-D-glucose contacts are provided by residues 338 to 341 (KFMV) and 343 to 344 (FE).

The protein belongs to the galactose-1-phosphate uridylyltransferase type 1 family. Homodimer. The cofactor is Zn(2+).

It carries out the reaction alpha-D-galactose 1-phosphate + UDP-alpha-D-glucose = alpha-D-glucose 1-phosphate + UDP-alpha-D-galactose. It functions in the pathway carbohydrate metabolism; galactose metabolism. This is Galactose-1-phosphate uridylyltransferase (GAL7) from Cryptococcus neoformans var. neoformans serotype D (strain B-3501A) (Filobasidiella neoformans).